We begin with the raw amino-acid sequence, 204 residues long: Pro-hevein (204 aa).

The N-terminal stretch at 1-17 (MNIFIVVLLCLTGVAIA) is a signal peptide. The 43-residue stretch at 18 to 60 (EQCGRQAGGKLCPNNLCCSQWGWCGSTDEYCSPDHNCQSNCKD) folds into the Chitin-binding type-1 domain. Disulfide bonds link C20/C35, C29/C41, C34/C48, and C54/C58. A propeptide spanning residues 61–66 (SGEGVG) is cleaved from the precursor. One can recognise a Barwin domain in the interval 68-189 (GSASNVLATY…VNYQFVDCGD (122 aa)). 3 disulfides stabilise this stretch: C96/C128, C117/C151, and C131/C187.

Proteolytically processed to yield the two chains of the mature protein. Laticifer.

Its function is as follows. N-acetyl-D-glucosamine / N-acetyl-D-neuraminic acid binding lectin. Can inhibit fungal growth. This chain is Pro-hevein (HEV1), found in Hevea brasiliensis (Para rubber tree).